A 671-amino-acid chain; its full sequence is UvrABC system protein B (671 aa).

The Helicase ATP-binding domain maps to K31–N189. G44–T51 is a binding site for ATP. The Beta-hairpin motif lies at Y97–I120. Residues Q437 to I599 enclose the Helicase C-terminal domain. The UVR domain maps to K634–D669.

The protein belongs to the UvrB family. In terms of assembly, forms a heterotetramer with UvrA during the search for lesions. Interacts with UvrC in an incision complex.

It is found in the cytoplasm. In terms of biological role, the UvrABC repair system catalyzes the recognition and processing of DNA lesions. A damage recognition complex composed of 2 UvrA and 2 UvrB subunits scans DNA for abnormalities. Upon binding of the UvrA(2)B(2) complex to a putative damaged site, the DNA wraps around one UvrB monomer. DNA wrap is dependent on ATP binding by UvrB and probably causes local melting of the DNA helix, facilitating insertion of UvrB beta-hairpin between the DNA strands. Then UvrB probes one DNA strand for the presence of a lesion. If a lesion is found the UvrA subunits dissociate and the UvrB-DNA preincision complex is formed. This complex is subsequently bound by UvrC and the second UvrB is released. If no lesion is found, the DNA wraps around the other UvrB subunit that will check the other stand for damage. The sequence is that of UvrABC system protein B from Lacticaseibacillus casei (strain BL23) (Lactobacillus casei).